A 171-amino-acid polypeptide reads, in one-letter code: Methylated-DNA--protein-cysteine methyltransferase (171 aa).

The active-site Nucleophile; methyl group acceptor is the Cys139.

This sequence belongs to the MGMT family.

The protein resides in the cytoplasm. The catalysed reaction is a 6-O-methyl-2'-deoxyguanosine in DNA + L-cysteinyl-[protein] = S-methyl-L-cysteinyl-[protein] + a 2'-deoxyguanosine in DNA. It catalyses the reaction a 4-O-methyl-thymidine in DNA + L-cysteinyl-[protein] = a thymidine in DNA + S-methyl-L-cysteinyl-[protein]. In terms of biological role, involved in the cellular defense against the biological effects of O6-methylguanine (O6-MeG) and O4-methylthymine (O4-MeT) in DNA. Repairs the methylated nucleobase in DNA by stoichiometrically transferring the methyl group to a cysteine residue in the enzyme. This is a suicide reaction: the enzyme is irreversibly inactivated. This chain is Methylated-DNA--protein-cysteine methyltransferase, found in Shigella flexneri.